Here is a 504-residue protein sequence, read N- to C-terminus: Deoxyguanosinetriphosphate triphosphohydrolase (504 aa).

One can recognise an HD domain in the interval 66-273 (RLTHSLEVQQ…MEAADDISYC (208 aa)).

This sequence belongs to the dGTPase family. Type 1 subfamily. Homotetramer. Requires Mg(2+) as cofactor.

It carries out the reaction dGTP + H2O = 2'-deoxyguanosine + triphosphate + H(+). Its function is as follows. dGTPase preferentially hydrolyzes dGTP over the other canonical NTPs. This chain is Deoxyguanosinetriphosphate triphosphohydrolase, found in Cronobacter sakazakii (strain ATCC BAA-894) (Enterobacter sakazakii).